Reading from the N-terminus, the 494-residue chain is Protein translocase subunit SecD (494 aa).

Helical transmembrane passes span 7–27 (WFAL…NLPF), 322–342 (LIAA…FYRL), 345–365 (FIAI…YALI), 372–392 (PGVA…VLIF), 420–440 (IIDG…LGTG), and 441–461 (FVKG…FTAL).

Belongs to the SecD/SecF family. SecD subfamily. As to quaternary structure, forms a complex with SecF. Part of the essential Sec protein translocation apparatus which comprises SecA, SecYEG and auxiliary proteins SecDF. Other proteins may also be involved.

It is found in the cell inner membrane. Functionally, part of the Sec protein translocase complex. Interacts with the SecYEG preprotein conducting channel. SecDF uses the proton motive force (PMF) to complete protein translocation after the ATP-dependent function of SecA. Probably participates in protein translocation into and across both the cytoplasmic and thylakoid membranes in cyanobacterial cells. This Prochlorococcus marinus (strain SARG / CCMP1375 / SS120) protein is Protein translocase subunit SecD.